The following is a 668-amino-acid chain: tRNA 5-methylaminomethyl-2-thiouridine biosynthesis bifunctional protein MnmC (668 aa).

A tRNA (mnm(5)s(2)U34)-methyltransferase region spans residues 1–245 (MKHYSIQPAN…KREMLCGVME (245 aa)). The interval 270-668 (IGGGIACALL…LLKGKAVKAG (399 aa)) is FAD-dependent cmnm(5)s(2)U34 oxidoreductase.

It in the N-terminal section; belongs to the methyltransferase superfamily. tRNA (mnm(5)s(2)U34)-methyltransferase family. The protein in the C-terminal section; belongs to the DAO family. FAD is required as a cofactor.

It is found in the cytoplasm. The enzyme catalyses 5-aminomethyl-2-thiouridine(34) in tRNA + S-adenosyl-L-methionine = 5-methylaminomethyl-2-thiouridine(34) in tRNA + S-adenosyl-L-homocysteine + H(+). In terms of biological role, catalyzes the last two steps in the biosynthesis of 5-methylaminomethyl-2-thiouridine (mnm(5)s(2)U) at the wobble position (U34) in tRNA. Catalyzes the FAD-dependent demodification of cmnm(5)s(2)U34 to nm(5)s(2)U34, followed by the transfer of a methyl group from S-adenosyl-L-methionine to nm(5)s(2)U34, to form mnm(5)s(2)U34. In Shigella boydii serotype 18 (strain CDC 3083-94 / BS512), this protein is tRNA 5-methylaminomethyl-2-thiouridine biosynthesis bifunctional protein MnmC.